A 335-amino-acid chain; its full sequence is Ubiquinone biosynthesis protein COQ4, mitochondrial (335 aa).

A mitochondrion-targeting transit peptide spans 1–10 (MLRLSLLRST). 4 residues coordinate Zn(2+): His-210, Asp-211, His-214, and Glu-226.

Belongs to the COQ4 family. Component of a multi-subunit COQ enzyme complex, composed of at least COQ3, COQ4, COQ5, COQ6, COQ7 and COQ9. Interacts with COQ3. The cofactor is Zn(2+).

The protein resides in the mitochondrion inner membrane. It catalyses the reaction 4-hydroxy-3-methoxy-5-(all-trans-hexaprenyl)benzoate + H(+) = 2-methoxy-6-(all-trans-hexaprenyl)phenol + CO2. It functions in the pathway cofactor biosynthesis; ubiquinone biosynthesis. Functionally, lyase that catalyzes the C1-decarboxylation of 4-hydroxy-3-methoxy-5-(all-trans-hexaprenyl)benzoic acid into 2-methoxy-6-(all-trans-hexaprenyl)phenol during ubiquinone biosynthesis. In Saccharomyces cerevisiae (strain RM11-1a) (Baker's yeast), this protein is Ubiquinone biosynthesis protein COQ4, mitochondrial.